The following is a 1214-amino-acid chain: [F-actin]-monooxygenase mical1 (1214 aa).

A monooxygenase domain region spans residues 1-488 (MVNPLDSVNP…KRLYEAEEQE (488 aa)). FAD contacts are provided by residues C96, 115–117 (EKR), 122–124 (RNN), F182, Y292, and D392. A disordered region spans residues 484-505 (AEEQESKPNKLKKPDIKAKPRK). The region spanning 508–614 (MKRLEELLSW…YLTQIRNALT (107 aa)) is the Calponin-homology (CH) domain. Residues 649 to 676 (HKDRLASVKGPRQQNMKEKEEKKDVKEE) are disordered. The segment covering 663-676 (NMKEKEEKKDVKEE) has biased composition (basic and acidic residues). The LIM zinc-binding domain maps to 686 to 748 (EPCYFCKKHL…ELHSLAEEEE (63 aa)). Zn(2+)-binding residues include C688, C691, H709, C712, C715, C718, C738, and H741. Residues 747 to 1019 (EEGDEGHGGA…DDEDEDEEDL (273 aa)) are disordered. A compositionally biased stretch (acidic residues) spans 796 to 815 (PDFDESTEFPAPDQDEPPDL). The segment covering 828–841 (SAENTNMENQQHNI) has biased composition (polar residues). A compositionally biased stretch (low complexity) spans 910-922 (RGSSSAASTSSSS). The span at 974–987 (SPWNLSSPRLQQRF) shows a compositional bias: polar residues. Acidic residues predominate over residues 1003 to 1019 (VSEDDNEDDEDEDEEDL). The region spanning 1053–1199 (KMTEIQRFHK…EVNDQFNSSL (147 aa)) is the bMERB domain. The stretch at 1061–1131 (HKAQSIQRRL…DLMVASRQLE (71 aa)) forms a coiled coil. Residues 1194–1214 (QFNSSLDAKRRSTTASQVHWE) are disordered.

It belongs to the Mical family. FAD is required as a cofactor.

It is found in the cytoplasm. The protein resides in the cytoskeleton. The protein localises to the midbody. Its subcellular location is the endosome membrane. It carries out the reaction L-methionyl-[F-actin] + NADPH + O2 + H(+) = L-methionyl-(R)-S-oxide-[F-actin] + NADP(+) + H2O. It catalyses the reaction NADPH + O2 + H(+) = H2O2 + NADP(+). Functionally, monooxygenase that promotes depolymerization of F-actin by mediating oxidation of specific methionine residues on actin to form methionine-sulfoxide, resulting in actin filament disassembly and prevent repolymerization. May be involved in endosomal tubule extension and neosynthesized protein export. This Danio rerio (Zebrafish) protein is [F-actin]-monooxygenase mical1 (mical1).